The chain runs to 550 residues: Iduronate 2-sulfatase (550 aa).

Positions 1 to 25 are cleaved as a signal peptide; sequence MPPPRTGRGLLWLGLVLSSVCVALG. The propeptide occupies 26 to 33; the sequence is SETQANST. Residues Asp-45, Asp-46, and Cys-84 each coordinate Ca(2+). Cys-84 functions as the Nucleophile in the catalytic mechanism. Residue Cys-84 is modified to 3-oxoalanine (Cys). Residue Asn-115 is glycosylated (N-linked (GlcNAc...) asparagine). Residue His-138 is part of the active site. Residue Asn-144 is glycosylated (N-linked (GlcNAc...) asparagine). A disulfide bond links Cys-171 and Cys-184. N-linked (GlcNAc...) asparagine glycans are attached at residues Asn-246, Asn-280, and Asn-325. Positions 334 and 335 each coordinate Ca(2+). Cysteines 422 and 432 form a disulfide. Asn-513 and Asn-537 each carry an N-linked (GlcNAc...) asparagine glycan.

Belongs to the sulfatase family. As to quaternary structure, monomer. The 58-kDa mature form is composed of two chains resulting from proteolitic processing, the 42-kDa chain and the 14-kDa chain that remain stably associated and form the 58-kDa intermediate form which is enzymatically active. Ca(2+) serves as cofactor. Post-translationally, synthesized as a 75-kDa precursor form in the endoplasmic reticulum (ER), and then processed by proteolytic cleavage through various intermediates to yield a 55-kDa mature form, with the release of an 18 kDa polypeptide. The conversion to 3-oxoalanine (also known as C-formylglycine, FGly), of a serine or cysteine residue in prokaryotes and of a cysteine residue in eukaryotes, is critical for catalytic activity. Liver, kidney, lung, and placenta.

Its subcellular location is the lysosome. It carries out the reaction Hydrolysis of the 2-sulfate groups of the L-iduronate 2-sulfate units of dermatan sulfate, heparan sulfate and heparin.. In terms of biological role, lysosomal enzyme involved in the degradation pathway of dermatan sulfate and heparan sulfate. The polypeptide is Iduronate 2-sulfatase (IDS) (Homo sapiens (Human)).